The primary structure comprises 1376 residues: Ubiquitin carboxyl-terminal hydrolase 47 (1376 aa).

K122 is modified (N6-acetyllysine). Residues 188-564 enclose the USP domain; the sequence is VGLVNQAMTC…NAYMLIYRLK (377 aa). C197 functions as the Nucleophile in the catalytic mechanism. The tract at residues 426 to 452 is disordered; it reads EKSPQTESCTDSGAENEGSCHSDQMSN. Residues 430–452 are compositionally biased toward polar residues; it reads QTESCTDSGAENEGSCHSDQMSN. H503 acts as the Proton acceptor in catalysis. At S832 the chain carries Phosphoserine. Disordered stretches follow at residues 835 to 863, 880 to 971, and 985 to 1025; these read SYSK…KGPA, LKSL…SSDT, and GLDS…ESGK. Residues 882–900 show a composition bias toward low complexity; it reads SLSLQQQQQDGDNGDSSKS. Phosphoserine occurs at positions 911 and 934. Over residues 930–939 the composition is skewed to polar residues; the sequence is HIQTSDPENF. A compositionally biased stretch (basic and acidic residues) spans 941-951; that stretch reads SEERSDSDVNN. The segment covering 954-970 has biased composition (low complexity); the sequence is STSSVDSDILSSSHSSD. The segment covering 998–1007 has biased composition (basic and acidic residues); the sequence is KANEGKKETW. The span at 1008–1021 shows a compositional bias: acidic residues; that stretch reads DTAEEDSGTDSEYD. A Phosphoserine modification is found at S1014. T1016 carries the phosphothreonine modification. Residue S1018 is modified to Phosphoserine.

Belongs to the peptidase C19 family. USP47 subfamily. Interacts with BTRC and FBXW11. Interacts with POLB.

Its subcellular location is the cytoplasm. The catalysed reaction is Thiol-dependent hydrolysis of ester, thioester, amide, peptide and isopeptide bonds formed by the C-terminal Gly of ubiquitin (a 76-residue protein attached to proteins as an intracellular targeting signal).. Functionally, ubiquitin-specific protease that specifically deubiquitinates monoubiquitinated DNA polymerase beta (POLB), stabilizing POLB thereby playing a role in base-excision repair (BER). Acts as a regulator of cell growth and genome integrity. May also indirectly regulate CDC25A expression at a transcriptional level. The sequence is that of Ubiquitin carboxyl-terminal hydrolase 47 (Usp47) from Mus musculus (Mouse).